The following is a 204-amino-acid chain: Auxin-binding protein 4 (204 aa).

Positions M1–S41 are cleaved as a signal peptide. A disulfide bridge links C43 with C196. Zn(2+) is bound by residues H98, H100, and E104. An N-linked (GlcNAc...) asparagine glycan is attached at N136. A Zn(2+)-binding site is contributed by H147. Positions K201–L204 match the Prevents secretion from ER motif.

Homodimer.

Its subcellular location is the endoplasmic reticulum lumen. Its function is as follows. This is probably a receptor for the plant hormone auxin. This is Auxin-binding protein 4 (ABP4) from Zea mays (Maize).